The following is a 312-amino-acid chain: Acetyl-coenzyme A carboxylase carboxyl transferase subunit beta (312 aa).

One can recognise a CoA carboxyltransferase N-terminal domain in the interval 24 to 293 (LWIKCPDSGQ…VEHAKPAPQL (270 aa)). Residues 286–312 (HAKPAPQLPPPAKPAETAEAPAVATSA) are disordered. Low complexity predominate over residues 299–312 (PAETAEAPAVATSA).

It belongs to the AccD/PCCB family. Acetyl-CoA carboxylase is a heterohexamer composed of biotin carboxyl carrier protein (AccB), biotin carboxylase (AccC) and two subunits each of ACCase subunit alpha (AccA) and ACCase subunit beta (AccD).

The protein localises to the cytoplasm. It catalyses the reaction N(6)-carboxybiotinyl-L-lysyl-[protein] + acetyl-CoA = N(6)-biotinyl-L-lysyl-[protein] + malonyl-CoA. The protein operates within lipid metabolism; malonyl-CoA biosynthesis; malonyl-CoA from acetyl-CoA: step 1/1. In terms of biological role, component of the acetyl coenzyme A carboxylase (ACC) complex. Biotin carboxylase (BC) catalyzes the carboxylation of biotin on its carrier protein (BCCP) and then the CO(2) group is transferred by the transcarboxylase to acetyl-CoA to form malonyl-CoA. This Bradyrhizobium sp. (strain ORS 278) protein is Acetyl-coenzyme A carboxylase carboxyl transferase subunit beta.